Consider the following 569-residue polypeptide: Proline--tRNA ligase (569 aa).

It belongs to the class-II aminoacyl-tRNA synthetase family. ProS type 1 subfamily. Homodimer.

Its subcellular location is the cytoplasm. The catalysed reaction is tRNA(Pro) + L-proline + ATP = L-prolyl-tRNA(Pro) + AMP + diphosphate. Functionally, catalyzes the attachment of proline to tRNA(Pro) in a two-step reaction: proline is first activated by ATP to form Pro-AMP and then transferred to the acceptor end of tRNA(Pro). As ProRS can inadvertently accommodate and process non-cognate amino acids such as alanine and cysteine, to avoid such errors it has two additional distinct editing activities against alanine. One activity is designated as 'pretransfer' editing and involves the tRNA(Pro)-independent hydrolysis of activated Ala-AMP. The other activity is designated 'posttransfer' editing and involves deacylation of mischarged Ala-tRNA(Pro). The misacylated Cys-tRNA(Pro) is not edited by ProRS. The sequence is that of Proline--tRNA ligase from Campylobacter jejuni subsp. jejuni serotype O:23/36 (strain 81-176).